Reading from the N-terminus, the 161-residue chain is Large ribosomal subunit protein eL21 (161 aa).

The protein belongs to the eukaryotic ribosomal protein eL21 family.

This chain is Large ribosomal subunit protein eL21 (rpl-21), found in Caenorhabditis elegans.